Reading from the N-terminus, the 252-residue chain is Imidazole glycerol phosphate synthase subunit HisF (252 aa).

Residues D11 and D130 contribute to the active site.

It belongs to the HisA/HisF family. Heterodimer of HisH and HisF.

It is found in the cytoplasm. The catalysed reaction is 5-[(5-phospho-1-deoxy-D-ribulos-1-ylimino)methylamino]-1-(5-phospho-beta-D-ribosyl)imidazole-4-carboxamide + L-glutamine = D-erythro-1-(imidazol-4-yl)glycerol 3-phosphate + 5-amino-1-(5-phospho-beta-D-ribosyl)imidazole-4-carboxamide + L-glutamate + H(+). The protein operates within amino-acid biosynthesis; L-histidine biosynthesis; L-histidine from 5-phospho-alpha-D-ribose 1-diphosphate: step 5/9. In terms of biological role, IGPS catalyzes the conversion of PRFAR and glutamine to IGP, AICAR and glutamate. The HisF subunit catalyzes the cyclization activity that produces IGP and AICAR from PRFAR using the ammonia provided by the HisH subunit. This is Imidazole glycerol phosphate synthase subunit HisF from Rhodospirillum rubrum (strain ATCC 11170 / ATH 1.1.1 / DSM 467 / LMG 4362 / NCIMB 8255 / S1).